We begin with the raw amino-acid sequence, 443 residues long: Zinc finger CCCH domain-containing protein 63 (443 aa).

Disordered regions lie at residues 1-29 and 56-99; these read MDFD…MAPT and LPGP…SSSW. 2 consecutive C3H1-type zinc fingers follow at residues 30–56 and 109–136; these read DTRQ…HREL and TKTE…HCWS. WD repeat units lie at residues 149–190, 228–265, 272–311, 313–349, 354–396, and 404–442; these read GHEK…GVLK, GPVG…NCFE, GHTL…QTLT, HSSV…NLEV, KEEH…LFIR, and FAKQ…TAAL.

The chain is Zinc finger CCCH domain-containing protein 63 (ZFWD2) from Arabidopsis thaliana (Mouse-ear cress).